The primary structure comprises 118 residues: Large ribosomal subunit protein bL20 (118 aa).

The protein belongs to the bacterial ribosomal protein bL20 family.

Functionally, binds directly to 23S ribosomal RNA and is necessary for the in vitro assembly process of the 50S ribosomal subunit. It is not involved in the protein synthesizing functions of that subunit. This Hahella chejuensis (strain KCTC 2396) protein is Large ribosomal subunit protein bL20.